We begin with the raw amino-acid sequence, 294 residues long: N-acetylmuramic acid 6-phosphate etherase (294 aa).

In terms of domain architecture, SIS spans 54-217 (VIKSFEEEGR…STASMIGVGK (164 aa)). The Proton donor role is filled by E82. The active site involves E113.

The protein belongs to the GCKR-like family. MurNAc-6-P etherase subfamily. In terms of assembly, homodimer.

It carries out the reaction N-acetyl-D-muramate 6-phosphate + H2O = N-acetyl-D-glucosamine 6-phosphate + (R)-lactate. Its pathway is amino-sugar metabolism; N-acetylmuramate degradation. Specifically catalyzes the cleavage of the D-lactyl ether substituent of MurNAc 6-phosphate, producing GlcNAc 6-phosphate and D-lactate. The sequence is that of N-acetylmuramic acid 6-phosphate etherase from Bacillus cereus (strain B4264).